The sequence spans 555 residues: Urocanate hydratase (555 aa).

NAD(+) contacts are provided by residues 52–53 (GG), Gln-130, 176–178 (GMG), Glu-196, Arg-201, 242–243 (NA), 263–267 (QTSAH), 273–274 (YL), and Tyr-322. The active site involves Cys-410. An NAD(+)-binding site is contributed by Gly-492.

It belongs to the urocanase family. It depends on NAD(+) as a cofactor.

It is found in the cytoplasm. The enzyme catalyses 4-imidazolone-5-propanoate = trans-urocanate + H2O. The protein operates within amino-acid degradation; L-histidine degradation into L-glutamate; N-formimidoyl-L-glutamate from L-histidine: step 2/3. In terms of biological role, catalyzes the conversion of urocanate to 4-imidazolone-5-propionate. The polypeptide is Urocanate hydratase (Shewanella sp. (strain W3-18-1)).